The following is a 660-amino-acid chain: Ankyrin repeat domain-containing protein OPG023 (660 aa).

9 ANK repeats span residues 31-64, 101-131, 135-166, 190-222, 226-257, 268-302, 325-359, 449-478, and 482-512; these read FKNNALHAYLFNEHCNNVEVVKLLLDSGTNPLHK, NDFNIFSYMKSKNVDVDLIKVLVEHGFDLSV, NHRSVIENYVMTDDPVPEIIDLFIENGCSVLY, YIIAHLYSESDTRAYVRPEVVKCLINHGIKPSS, NYCTALQYYIKSSHIDIDIVKLLMKGIDNTAY, RGIMADYLNSDYRYNKDVDLDLVKLFLENGKPYGI, NSDVLQHILIEYMTFGDIDIPLVECMLEYGAVVNK, RGETLLHKAVRYNKQSLVSLLLESGSDVNI, and NGYTCITIAINESRNIELLKMLLCHKPTLDC. Positions 578–658 are PRANC/F-box-like; sequence NTMFSLIFTE…PYTIKYKIFE (81 aa).

Belongs to the orthopoxvirus OPG023 family. In terms of assembly, interacts (via N-terminus) with host RELA. Interacts (via PRANC/F-box-like domain) with the SKP1 component of the host SCF ubiquitin ligase complex.

In terms of biological role, substrate-specific adapter of SKP1-containing E3 ubiquitin-protein ligases which mediate the ubiquitination and subsequent proteasomal degradation of host target proteins. Prevents activation and subsequent nuclear localization of NF-kappa-B in infected cells, by targeting NF-kappa-B RELA subunit to the SCF E3 ligase complex. This is Ankyrin repeat domain-containing protein OPG023 (OPG023) from Cynomys gunnisoni (Gunnison's prairie dog).